A 456-amino-acid polypeptide reads, in one-letter code: Phosphoglucomutase/phosphomannomutase (456 aa).

The active-site Phosphoserine intermediate is Ser101. Mg(2+) is bound by residues Ser101, Asp243, Asp245, and Asp247. Ser101 bears the Phosphoserine; by autocatalysis mark.

The protein belongs to the phosphohexose mutase family. Homotetramer. The cofactor is Mg(2+). Activated by phosphorylation.

It catalyses the reaction alpha-D-glucose 1-phosphate = alpha-D-glucose 6-phosphate. The catalysed reaction is alpha-D-mannose 1-phosphate = D-mannose 6-phosphate. Functionally, catalyzes the interconversion of glucose 1-phosphate and glucose 6-phosphate, and the interconversion of mannose 1-phosphate and mannose 6-phosphate. Also displays low activity with deoxyribose 1-phosphate and glucosamine 1-phosphate. This is Phosphoglucomutase/phosphomannomutase from Thermococcus kodakarensis (strain ATCC BAA-918 / JCM 12380 / KOD1) (Pyrococcus kodakaraensis (strain KOD1)).